Consider the following 572-residue polypeptide: Methionine--tRNA ligase (572 aa).

Positions 11–21 match the 'HIGH' region motif; that stretch reads PYINGIKHLGN. Positions 143, 146, 156, and 159 each coordinate Zn(2+). The short motif at 346 to 350 is the 'KMSKS' region element; sequence QFSTS. Threonine 349 is an ATP binding site.

It belongs to the class-I aminoacyl-tRNA synthetase family. MetG type 1 subfamily. Monomer. The cofactor is Zn(2+).

It is found in the cytoplasm. It catalyses the reaction tRNA(Met) + L-methionine + ATP = L-methionyl-tRNA(Met) + AMP + diphosphate. Its function is as follows. Is required not only for elongation of protein synthesis but also for the initiation of all mRNA translation through initiator tRNA(fMet) aminoacylation. This chain is Methionine--tRNA ligase, found in Dinoroseobacter shibae (strain DSM 16493 / NCIMB 14021 / DFL 12).